A 245-amino-acid chain; its full sequence is Mannose/glucose-specific lectin (245 aa).

A carbohydrate is bound by residues Asp87 and Gly107. Asn119 carries N-linked (GlcNAc...) asparagine glycosylation. Residues Glu129 and Asp131 each coordinate Mn(2+). Asp131 and Phe133 together coordinate Ca(2+). A carbohydrate-binding residues include Ser138 and Asn139. Ca(2+)-binding residues include Asn139 and Asp142. Mn(2+)-binding residues include Asp142 and His147. A carbohydrate-binding residues include Gly221, Glu222, and Gln223.

The protein belongs to the leguminous lectin family. Homodimer.

Functionally, mannose/glucose-specific lectin that also binds derivatives N-acetyl-D-glucosamine and alpha-methyl-D-mannopyranoside with even higher affinity. Has hemagglutinating activity towards rabbit erythrocytes. Is toxic towards brine shrimp A.nauplii. In rats, induces dose-dependent paw edema. In Centrolobium tomentosum (Arariba), this protein is Mannose/glucose-specific lectin.